A 418-amino-acid polypeptide reads, in one-letter code: Light-independent protochlorophyllide reductase subunit N (418 aa).

[4Fe-4S] cluster contacts are provided by cysteine 17, cysteine 42, and cysteine 103.

Belongs to the BchN/ChlN family. As to quaternary structure, protochlorophyllide reductase is composed of three subunits; ChlL, ChlN and ChlB. Forms a heterotetramer of two ChlB and two ChlN subunits. [4Fe-4S] cluster is required as a cofactor.

The enzyme catalyses chlorophyllide a + oxidized 2[4Fe-4S]-[ferredoxin] + 2 ADP + 2 phosphate = protochlorophyllide a + reduced 2[4Fe-4S]-[ferredoxin] + 2 ATP + 2 H2O. The protein operates within porphyrin-containing compound metabolism; chlorophyll biosynthesis (light-independent). Its function is as follows. Component of the dark-operative protochlorophyllide reductase (DPOR) that uses Mg-ATP and reduced ferredoxin to reduce ring D of protochlorophyllide (Pchlide) to form chlorophyllide a (Chlide). This reaction is light-independent. The NB-protein (ChlN-ChlB) is the catalytic component of the complex. This chain is Light-independent protochlorophyllide reductase subunit N, found in Prochlorococcus marinus (strain NATL2A).